Reading from the N-terminus, the 456-residue chain is Bifunctional protein GlmU (456 aa).

Residues 1–229 (MLNNAMSVVI…LSEVEGVNNR (229 aa)) form a pyrophosphorylase region. Residues 11–14 (LAAG), lysine 25, glutamine 76, 81–82 (GT), 103–105 (YGD), glycine 140, glutamate 154, asparagine 169, and asparagine 227 each bind UDP-N-acetyl-alpha-D-glucosamine. A Mg(2+)-binding site is contributed by aspartate 105. Residue asparagine 227 coordinates Mg(2+). The tract at residues 230–250 (LQLSRLERVYQSEQAEKLLLA) is linker. Positions 251 to 456 (GVMLRDPARF…EGWRRPVKKK (206 aa)) are N-acetyltransferase. 2 residues coordinate UDP-N-acetyl-alpha-D-glucosamine: arginine 333 and lysine 351. Catalysis depends on histidine 363, which acts as the Proton acceptor. Residues tyrosine 366 and asparagine 377 each coordinate UDP-N-acetyl-alpha-D-glucosamine. Acetyl-CoA-binding positions include alanine 380, 386–387 (NY), serine 405, alanine 423, and arginine 440.

It in the N-terminal section; belongs to the N-acetylglucosamine-1-phosphate uridyltransferase family. The protein in the C-terminal section; belongs to the transferase hexapeptide repeat family. In terms of assembly, homotrimer. It depends on Mg(2+) as a cofactor.

Its subcellular location is the cytoplasm. The enzyme catalyses alpha-D-glucosamine 1-phosphate + acetyl-CoA = N-acetyl-alpha-D-glucosamine 1-phosphate + CoA + H(+). It carries out the reaction N-acetyl-alpha-D-glucosamine 1-phosphate + UTP + H(+) = UDP-N-acetyl-alpha-D-glucosamine + diphosphate. The protein operates within nucleotide-sugar biosynthesis; UDP-N-acetyl-alpha-D-glucosamine biosynthesis; N-acetyl-alpha-D-glucosamine 1-phosphate from alpha-D-glucosamine 6-phosphate (route II): step 2/2. It functions in the pathway nucleotide-sugar biosynthesis; UDP-N-acetyl-alpha-D-glucosamine biosynthesis; UDP-N-acetyl-alpha-D-glucosamine from N-acetyl-alpha-D-glucosamine 1-phosphate: step 1/1. Its pathway is bacterial outer membrane biogenesis; LPS lipid A biosynthesis. Catalyzes the last two sequential reactions in the de novo biosynthetic pathway for UDP-N-acetylglucosamine (UDP-GlcNAc). The C-terminal domain catalyzes the transfer of acetyl group from acetyl coenzyme A to glucosamine-1-phosphate (GlcN-1-P) to produce N-acetylglucosamine-1-phosphate (GlcNAc-1-P), which is converted into UDP-GlcNAc by the transfer of uridine 5-monophosphate (from uridine 5-triphosphate), a reaction catalyzed by the N-terminal domain. The chain is Bifunctional protein GlmU from Escherichia coli O81 (strain ED1a).